Reading from the N-terminus, the 330-residue chain is Inactive serine protease 45 (330 aa).

An N-terminal signal peptide occupies residues 1–35 (MATSLRLLDAGPGSLRRWIPTCFAALLLLPPRPNL). Residues 45–291 (VCGAPWWSDS…YTGWIKEQVS (247 aa)) form the Peptidase S1 domain. 4 disulfide bridges follow: cysteine 75/cysteine 91, cysteine 172/cysteine 249, cysteine 207/cysteine 230, and cysteine 239/cysteine 267. The N-linked (GlcNAc...) asparagine glycan is linked to asparagine 272.

Belongs to the peptidase S1 family.

It is found in the secreted. The chain is Inactive serine protease 45 (Prss45) from Rattus norvegicus (Rat).